The chain runs to 72 residues: Mitochondrial import receptor subunit TOM7-1 (72 aa).

Residues 2 to 41 (LKPKGKNTKKAAAADEDDGAVAVVGKFVKEWGTWTAKKAK) are Cytoplasmic-facing. The chain crosses the membrane as a helical span at residues 42 to 59 (VITHYGFIPLVIIIGMNS). The Mitochondrial intermembrane portion of the chain corresponds to 60 to 72 (EPKPSLSQLLSPV).

It belongs to the Tom7 family. As to quaternary structure, forms part of the preprotein translocase complex of the outer mitochondrial membrane (TOM complex).

It localises to the mitochondrion outer membrane. Its function is as follows. Seems to act as a modulator of the dynamics of the mitochondrial protein transport machinery. Seems to promote the dissociation of subunits of the outer membrane translocase. The chain is Mitochondrial import receptor subunit TOM7-1 (TOM7-1) from Solanum tuberosum (Potato).